Consider the following 128-residue polypeptide: Sulfurtransferase TusD (128 aa).

The Cysteine persulfide intermediate role is filled by Cys-78.

Belongs to the DsrE/TusD family. Heterohexamer, formed by a dimer of trimers. The hexameric TusBCD complex contains 2 copies each of TusB, TusC and TusD. The TusBCD complex interacts with TusE.

It is found in the cytoplasm. In terms of biological role, part of a sulfur-relay system required for 2-thiolation of 5-methylaminomethyl-2-thiouridine (mnm(5)s(2)U) at tRNA wobble positions. Accepts sulfur from TusA and transfers it in turn to TusE. This is Sulfurtransferase TusD from Escherichia coli O157:H7.